The sequence spans 342 residues: Pre-mRNA-splicing factor 18 (342 aa).

An N-acetylmethionine modification is found at M1.

The protein belongs to the PRP18 family. In terms of assembly, heterodimer with PPIH. Interacts with PRPF4 and with the spliceosome. Part of a complex containing U4/U6 snRNPs.

It localises to the nucleus speckle. Its function is as follows. Participates in the second step of pre-mRNA splicing. This is Pre-mRNA-splicing factor 18 (PRPF18) from Bos taurus (Bovine).